Consider the following 205-residue polypeptide: Putative C-type lectin protein FPV001/FPV260 (205 aa).

The region spanning 84 to 187 is the C-type lectin domain; the sequence is CPRDWISHNG…CSVRRYLVCK (104 aa).

In Fowlpox virus (strain NVSL) (FPV), this protein is Putative C-type lectin protein FPV001/FPV260.